Consider the following 486-residue polypeptide: Ribulose bisphosphate carboxylase large chain 1 (486 aa).

Substrate is bound by residues Asn-125 and Thr-175. The active-site Proton acceptor is the Lys-177. A substrate-binding site is contributed by Lys-179. Lys-203, Asp-205, and Glu-206 together coordinate Mg(2+). Lys-203 carries the post-translational modification N6-carboxylysine. Catalysis depends on His-295, which acts as the Proton acceptor. Substrate contacts are provided by Arg-296, His-328, and Ser-380.

This sequence belongs to the RuBisCO large chain family. Type I subfamily. As to quaternary structure, heterohexadecamer of 8 large chains and 8 small chains. Requires Mg(2+) as cofactor.

It catalyses the reaction 2 (2R)-3-phosphoglycerate + 2 H(+) = D-ribulose 1,5-bisphosphate + CO2 + H2O. The catalysed reaction is D-ribulose 1,5-bisphosphate + O2 = 2-phosphoglycolate + (2R)-3-phosphoglycerate + 2 H(+). RuBisCO catalyzes two reactions: the carboxylation of D-ribulose 1,5-bisphosphate, the primary event in carbon dioxide fixation, as well as the oxidative fragmentation of the pentose substrate. Both reactions occur simultaneously and in competition at the same active site. This chain is Ribulose bisphosphate carboxylase large chain 1, found in Bradyrhizobium sp. (strain ORS 278).